The primary structure comprises 205 residues: Shieldin complex subunit 1 (205 aa).

As to quaternary structure, component of the shieldin complex, consisting of SHLD1, SHLD2, SHLD3 and MAD2L2/REV7. Within the complex, SHLD2 forms a scaffold which interacts with a SHLD3-MAD2L2 subcomplex via its N-terminus, and with SHLD1 via its C-terminus. Interacts with ASTE1.

The protein resides in the chromosome. Component of the shieldin complex, which plays an important role in repair of DNA double-stranded breaks (DSBs). During G1 and S phase of the cell cycle, the complex functions downstream of TP53BP1 to promote non-homologous end joining (NHEJ) and suppress DNA end resection. Mediates various NHEJ-dependent processes including immunoglobulin class-switch recombination, and fusion of unprotected telomeres. This chain is Shieldin complex subunit 1, found in Homo sapiens (Human).